Reading from the N-terminus, the 326-residue chain is MNDRFVCSLIEKSDLSNFVKKHSKNVFYDIAKAEAAVHQQTIDTIHFHEVGAIDSIVDIVGFFILWEQLEIEQVYSTPITDGSGTITIAHGVMPIPVPAVMELRKETNLIIQQDFEIKTELVTPTGLAIFKELSPLFVAPEQRLIEKIGYGFGKRETGKFNALRGSIFTETHSKKKRTEHHDQVLKIETNIDNQTPEQLGYVMDLLLEHGALDVFFTPIHMKKNRSAILLTVLTTTEEKEYFTELLFKHTSTIGMRFQTMERSVMDRSFKILETPFGKVHIKKNHYHGLLKESIEYQDCERIAKQYNFTIEEVYRLVQTLNNKTID.

This sequence belongs to the LarC family.

The chain is Putative nickel insertion protein from Enterococcus faecalis (strain ATCC 700802 / V583).